The chain runs to 514 residues: Cytochrome P450 monooxygenase nodJ (514 aa).

A helical membrane pass occupies residues E2 to A24. 3 N-linked (GlcNAc...) asparagine glycosylation sites follow: N144, N245, and N416. C432 is a binding site for heme.

This sequence belongs to the cytochrome P450 family. Requires heme as cofactor.

The protein resides in the membrane. It participates in secondary metabolite biosynthesis. Its function is as follows. Cytochrome P450 monooxygenase; part of the gene cluster that mediates the biosynthesis of the indole diterpenes nodulisporic acids (NA). Nodulisporic acid A (NAA) and its chemically modified derivatives are of particular significance because of their highly potent insecticidal activity against blood-feeding arthropods and lack of observable adverse effects on mammals, in particular the tremogenicity associated with the paspaline-derived IDTs is not observed. The geranylgeranyl diphosphate (GGPP) synthase ggs1, localized outside of the cluster, is proposed to catalyze the first step in nodulisporic acid biosynthesis via conversion of farnesyl pyrophosphate and isopentyl pyrophosphate into geranylgeranyl pyrophosphate (GGPP). Condensation of indole-3-glycerol phosphate with GGPP by the prenyl transferase nodC then forms 3-geranylgeranylindole (3-GGI). Epoxidation by the FAD-dependent monooxygenase nodM leads to a single-epoxidized-GGI that is substrate of the terpene cyclase nodB for cyclization to yield emindole SB. The terminal methyl carbon, C28, of emindole SB is then oxidized by the cytochrome P450 monooxygenase nodW to produce nodulisporic acid F (NAF), the pentacyclic core of NAA. NAF is converted to nodulisporic acid E (NAE) via prenylation. This step is probably performed by one of the indole diterpene prenyltransferases nodD1 or nodD2. Several oxidation steps performed by the FAD-linked oxidoreductase nodO and one of the cytochrome P450 monooxygenase nodR, nodX or nodZ further convert NAE to nodulisporic acid D (NAD). NAD is substrate of cytochrome P450 monooxygenase nodJ to produce the precursor of nodulisporic acid C (NAC), converted to NAC by one of the indole diterpene prenyltransferases nodD1 or nodD2. The FAD-dependent monooxygenase nodY2 then oxidizes NAC to nodulisporic acid B (NAB). Finally NAB is converted to NAA by one of the cytochrome P450 monooxygenases nodR, nodX or nodZ. In Hypoxylon pulicicidum, this protein is Cytochrome P450 monooxygenase nodJ.